The following is a 196-amino-acid chain: GTP cyclohydrolase-2 (196 aa).

49–53 (RVHSE) contributes to the GTP binding site. Zn(2+) is bound by residues Cys54, Cys65, and Cys67. Residues Gln70, 92-94 (EGR), and Thr114 each bind GTP. Residue Asp126 is the Proton acceptor of the active site. Arg128 (nucleophile) is an active-site residue. GTP-binding residues include Thr149 and Lys154.

The protein belongs to the GTP cyclohydrolase II family. In terms of assembly, homodimer. The cofactor is Zn(2+).

The catalysed reaction is GTP + 4 H2O = 2,5-diamino-6-hydroxy-4-(5-phosphoribosylamino)-pyrimidine + formate + 2 phosphate + 3 H(+). It functions in the pathway cofactor biosynthesis; riboflavin biosynthesis; 5-amino-6-(D-ribitylamino)uracil from GTP: step 1/4. Functionally, catalyzes the conversion of GTP to 2,5-diamino-6-ribosylamino-4(3H)-pyrimidinone 5'-phosphate (DARP), formate and pyrophosphate. The protein is GTP cyclohydrolase-2 of Escherichia coli O127:H6 (strain E2348/69 / EPEC).